Consider the following 255-residue polypeptide: Hydroxyacylglutathione hydrolase (255 aa).

Zn(2+) is bound by residues H56, H58, D60, H61, H114, D133, and H171.

It belongs to the metallo-beta-lactamase superfamily. Glyoxalase II family. As to quaternary structure, monomer. It depends on Zn(2+) as a cofactor.

The catalysed reaction is an S-(2-hydroxyacyl)glutathione + H2O = a 2-hydroxy carboxylate + glutathione + H(+). The protein operates within secondary metabolite metabolism; methylglyoxal degradation; (R)-lactate from methylglyoxal: step 2/2. In terms of biological role, thiolesterase that catalyzes the hydrolysis of S-D-lactoyl-glutathione to form glutathione and D-lactic acid. The protein is Hydroxyacylglutathione hydrolase of Nitrobacter winogradskyi (strain ATCC 25391 / DSM 10237 / CIP 104748 / NCIMB 11846 / Nb-255).